Here is a 293-residue protein sequence, read N- to C-terminus: Ribosomal protein L11 methyltransferase (293 aa).

Residues Thr-145, Gly-166, Asp-188, and Asn-230 each coordinate S-adenosyl-L-methionine.

It belongs to the methyltransferase superfamily. PrmA family.

Its subcellular location is the cytoplasm. The enzyme catalyses L-lysyl-[protein] + 3 S-adenosyl-L-methionine = N(6),N(6),N(6)-trimethyl-L-lysyl-[protein] + 3 S-adenosyl-L-homocysteine + 3 H(+). In terms of biological role, methylates ribosomal protein L11. The protein is Ribosomal protein L11 methyltransferase of Salmonella dublin (strain CT_02021853).